Reading from the N-terminus, the 132-residue chain is Large ribosomal subunit protein bL17 (132 aa).

The protein belongs to the bacterial ribosomal protein bL17 family. As to quaternary structure, part of the 50S ribosomal subunit. Contacts protein L32.

In Shewanella sediminis (strain HAW-EB3), this protein is Large ribosomal subunit protein bL17.